Consider the following 344-residue polypeptide: Dihydroorotase (344 aa).

Residues His-13 and His-15 each contribute to the Zn(2+) site. Substrate is bound by residues 15-17 (HVR) and Asn-41. The Zn(2+) site is built by Lys-99, His-136, and His-174. An N6-carboxylysine modification is found at Lys-99. His-136 lines the substrate pocket. Residue Leu-219 participates in substrate binding. Asp-247 serves as a coordination point for Zn(2+). Residue Asp-247 is part of the active site. His-251 and Ala-263 together coordinate substrate.

It belongs to the metallo-dependent hydrolases superfamily. DHOase family. Class II DHOase subfamily. In terms of assembly, homodimer. The cofactor is Zn(2+).

It carries out the reaction (S)-dihydroorotate + H2O = N-carbamoyl-L-aspartate + H(+). It participates in pyrimidine metabolism; UMP biosynthesis via de novo pathway; (S)-dihydroorotate from bicarbonate: step 3/3. Catalyzes the reversible cyclization of carbamoyl aspartate to dihydroorotate. The chain is Dihydroorotase from Azoarcus sp. (strain BH72).